The primary structure comprises 249 residues: Ubiquinone/menaquinone biosynthesis C-methyltransferase UbiE (249 aa).

S-adenosyl-L-methionine contacts are provided by residues Thr72, Asp93, and 121–122; that span reads NA.

The protein belongs to the class I-like SAM-binding methyltransferase superfamily. MenG/UbiE family.

The enzyme catalyses a 2-demethylmenaquinol + S-adenosyl-L-methionine = a menaquinol + S-adenosyl-L-homocysteine + H(+). The catalysed reaction is a 2-methoxy-6-(all-trans-polyprenyl)benzene-1,4-diol + S-adenosyl-L-methionine = a 5-methoxy-2-methyl-3-(all-trans-polyprenyl)benzene-1,4-diol + S-adenosyl-L-homocysteine + H(+). The protein operates within quinol/quinone metabolism; menaquinone biosynthesis; menaquinol from 1,4-dihydroxy-2-naphthoate: step 2/2. It functions in the pathway cofactor biosynthesis; ubiquinone biosynthesis. Its function is as follows. Methyltransferase required for the conversion of demethylmenaquinol (DMKH2) to menaquinol (MKH2) and the conversion of 2-polyprenyl-6-methoxy-1,4-benzoquinol (DDMQH2) to 2-polyprenyl-3-methyl-6-methoxy-1,4-benzoquinol (DMQH2). The polypeptide is Ubiquinone/menaquinone biosynthesis C-methyltransferase UbiE (Hahella chejuensis (strain KCTC 2396)).